A 469-amino-acid polypeptide reads, in one-letter code: E3 ubiquitin-protein ligase TRAIP (469 aa).

The segment at 7–50 (CTICSDFFDHSRDVAAIHCGHTFHLQCLIQWFETAPSRTCPQCR) adopts an RING-type zinc-finger fold. 2 coiled-coil regions span residues 70–177 (EENV…QSQR) and 201–280 (CVSL…TLNL). Positions 211–469 (LKEARKASGE…QAKLDTFLWS (259 aa)) are interaction with CYLD. Residue Lys304 forms a Glycyl lysine isopeptide (Lys-Gly) (interchain with G-Cter in SUMO2) linkage. A PIP-box motif is present at residues 460 to 469 (QAKLDTFLWS).

The protein belongs to the TRAIP family. As to quaternary structure, interacts (via PIP-box) with PCNA. Binds TRAF1, TRAF2, TRAF3, TRAF5 and TRAF6 is part of the receptor-TRAF signaling complex. May interact with CYLD; the C-terminus interacts with CYLD, however the interaction was not detected with the full-length protein. Interacts with POLK and POLN. Interacts with UIMC1. In terms of processing, sumoylated; sumoylation is required for nuclear localization. Sumoylation increases protein stability, possibly by preventing ubiquitination. Autoubiquitinated.

The protein localises to the nucleus. It localises to the nucleoplasm. The protein resides in the nucleolus. It is found in the chromosome. Its subcellular location is the cytoplasm. The protein localises to the perinuclear region. It catalyses the reaction S-ubiquitinyl-[E2 ubiquitin-conjugating enzyme]-L-cysteine + [acceptor protein]-L-lysine = [E2 ubiquitin-conjugating enzyme]-L-cysteine + N(6)-ubiquitinyl-[acceptor protein]-L-lysine.. It participates in protein modification; protein ubiquitination. Functionally, E3 ubiquitin ligase required to protect genome stability in response to replication stress. Acts as a key regulator of interstrand cross-link repair, which takes place when both strands of duplex DNA are covalently tethered together, thereby blocking replication and transcription. Controls the choice between the two pathways of replication-coupled interstrand-cross-link repair by mediating ubiquitination of MCM7 subunit of the CMG helicase complex. Short ubiquitin chains on MCM7 promote recruitment of DNA glycosylase NEIL3. If the interstrand cross-link cannot be cleaved by NEIL3, the ubiquitin chains continue to grow on MCM7, promoting the unloading of the CMG helicase complex by the VCP/p97 ATPase, enabling the Fanconi anemia DNA repair pathway. Only catalyzes ubiquitination of MCM7 when forks converge. Also involved in the repair of covalent DNA-protein cross-links (DPCs) during DNA synthesis: promotes ubiquitination of DPCs, leading to their degradation by the proteasome. Has also been proposed to play a role in promoting translesion synthesis by mediating the assembly of 'Lys-63'-linked poly-ubiquitin chains on the Y-family polymerase POLN in order to facilitate bypass of DNA lesions and preserve genomic integrity. The function in translesion synthesis is however controversial. Acts as a regulator of the spindle assembly checkpoint. Also acts as a negative regulator of innate immune signaling by inhibiting activation of NF-kappa-B mediated by TNF. Negatively regulates TLR3/4- and RIG-I-mediated IRF3 activation and subsequent IFNB1 production and cellular antiviral response by promoting 'Lys-48'-linked polyubiquitination of TNK1 leading to its proteasomal degradation. This Homo sapiens (Human) protein is E3 ubiquitin-protein ligase TRAIP.